Consider the following 469-residue polypeptide: Crinkler effector protein 1 (469 aa).

An N-terminal signal peptide occupies residues 1 to 17 (MSITLLCLIKGNTLANA). The LQLFLAK-like domain stretch occupies residues 18–57 (FPVDIDKDQLVGHLKKVIKAEQPQTFANVDAKDLKLWRVP). The interval 58-96 (ISDDHDDQLRNLSLEDSDELLAIRKISKYFPDSPPEECI) is DWL domain. An N-linked (GlcNAc...) asparagine glycan is attached at Asn68. Residues 97–103 (HVLVEPP) carry the HVLVXXP motif motif. Residues Asn126, Asn181, and Asn248 are each glycosylated (N-linked (GlcNAc...) asparagine).

It belongs to the Crinkler effector family. As to quaternary structure, homodimer.

Its subcellular location is the secreted. It localises to the host nucleus. Its function is as follows. Effector that participates in the arbuscule development step of the symbiosis. Arbuscular mycorrhizal (AM) symbiosis is one of the most prominent and beneficial plant-microbe interactions that facilitates mineral nutrition and confers tolerance to biotic and abiotic stresses. Is not involved in cell death processes. The sequence is that of Crinkler effector protein 1 from Rhizophagus irregularis (strain DAOM 181602 / DAOM 197198 / MUCL 43194) (Arbuscular mycorrhizal fungus).